A 980-amino-acid polypeptide reads, in one-letter code: Ras and Rab interactor 3 (980 aa).

The tract at residues 1–40 is disordered; the sequence is MRRAEAPSSAHPAGPIPDAGKGEGEEDEEKDGTRLGLSTT. Residues 63–158 form the SH2 domain; that stretch reads WLQLGLGQAE…LLPFTLRLPQ (96 aa). Positions 247-260 are enriched in pro residues; sequence PLPTGSYPPRPTPA. Disordered stretches follow at residues 247–496 and 509–560; these read PLPT…TGAS and QHLQ…LEFS. Residues 261–271 show a composition bias toward low complexity; that stretch reads TPDATSPTSKG. Pro residues predominate over residues 274–308; the sequence is RRPPPPPPLPTVPPTGPARPLAPPVPPAGPLPNSP. Composition is skewed to polar residues over residues 406–422 and 484–494; these read ISRTASLNLPPQSTVSS and QEASSEKQATG. The segment covering 514–523 has biased composition (low complexity); sequence QSSSCPQSSP. The interval 584 to 729 is interaction with RAB5B; it reads FASVFHAFLS…TTTDLGVTTS (146 aa). The region spanning 700–843 is the VPS9 domain; that stretch reads HSRDGSLQQL…IKNYDKITVT (144 aa). Residues 865-962 enclose the Ras-associating domain; sequence KARASRSSVQ…FHFVYRPQDS (98 aa).

This sequence belongs to the RIN (Ras interaction/interference) family. In terms of assembly, interacts with CD2AP, RAB5B, RAB31 and BIN1.

It is found in the cytoplasm. Its subcellular location is the cytoplasmic vesicle. The protein resides in the early endosome. In terms of biological role, ras effector protein that functions as a guanine nucleotide exchange (GEF) for RAB5B and RAB31, by exchanging bound GDP for free GTP. Required for normal RAB31 function. This is Ras and Rab interactor 3 (Rin3) from Mus musculus (Mouse).